A 141-amino-acid chain; its full sequence is MAALRQVAFYGKGGIGNSKRKPELVTASIEDRSAGSPSKNKMHFQSRMNVAASMRGGDGLPPSVRCRLHLEDGTTRGERKERTRLAATFQSVSEERPRLHMPRRVTTTHTTLFVTFVGFTTPIVPSTVWSISRSNHLKQSN.

To the N-terminal of nitrogenase iron protein (NifH). Has lost the ATP-binding site.

In terms of biological role, responsible for the nodulation efficiency and competitive ability of strain GR4 on alfalfa roots. The protein is Protein nfe1 (nfe1) of Rhizobium meliloti (Ensifer meliloti).